Consider the following 514-residue polypeptide: Na(+)/H(+) antiporter NhaB (514 aa).

The next 12 membrane-spanning stretches (helical) occupy residues 23 to 43 (LALL…PFIA), 63 to 83 (PLLP…TSAA), 97 to 117 (LLLM…LFIF), 120 to 140 (LLLS…AAAF), 144 to 164 (FLDA…FYGI), 202 to 222 (LMMH…VGEP), 238 to 258 (FFLR…LTCM), 303 to 323 (AIIG…VGLI), 357 to 377 (LTVF…APII), 391 to 411 (LFYL…VGTI), 447 to 467 (ATPN…APLI), and 475 to 495 (VWMA…CVEF).

It belongs to the NhaB Na(+)/H(+) (TC 2.A.34) antiporter family.

The protein localises to the cell inner membrane. It catalyses the reaction 2 Na(+)(in) + 3 H(+)(out) = 2 Na(+)(out) + 3 H(+)(in). Functionally, na(+)/H(+) antiporter that extrudes sodium in exchange for external protons. This Salmonella paratyphi B (strain ATCC BAA-1250 / SPB7) protein is Na(+)/H(+) antiporter NhaB.